A 328-amino-acid chain; its full sequence is NAD(P)H-dependent pentose reductase (328 aa).

Residue Y50 is the Proton donor of the active site. H112 provides a ligand contact to substrate. Residues 174 to 175 (AN), 223 to 232 (SSFGPQSFVE), and 279 to 289 (KSNNVDRLKQN) each bind NAD(+).

The protein belongs to the aldo/keto reductase family.

In terms of biological role, pentose reductase with a broad substrate affinity involved in pentose catabolism. Has highest reductase activities with L-arabinose and D-xylose as substrates, and displays much lower activities with D-ribose, D-galactose and D-glucose. Has highest dehydrogenase activity with L-arabitol as substrate, followed by xylitol and D-sorbitol. May be responsible for the first step of the L-arabinose catabolic pathway. This is NAD(P)H-dependent pentose reductase (PRD1) from Pyricularia oryzae (strain 70-15 / ATCC MYA-4617 / FGSC 8958) (Rice blast fungus).